Reading from the N-terminus, the 396-residue chain is Elongation factor Tu 2 (396 aa).

Positions 10-206 (KPHCNIGTIG…TVDAYIPQPD (197 aa)) constitute a tr-type G domain. The tract at residues 19 to 26 (GHVDHGKT) is G1. Residue 19–26 (GHVDHGKT) participates in GTP binding. Thr-26 is a binding site for Mg(2+). The G2 stretch occupies residues 60–64 (GITIN). The G3 stretch occupies residues 81-84 (DCPG). Residues 81 to 85 (DCPGH) and 136 to 139 (NKVD) contribute to the GTP site. A G4 region spans residues 136–139 (NKVD). The G5 stretch occupies residues 174-176 (SAK).

This sequence belongs to the TRAFAC class translation factor GTPase superfamily. Classic translation factor GTPase family. EF-Tu/EF-1A subfamily. As to quaternary structure, monomer.

The protein resides in the cytoplasm. It catalyses the reaction GTP + H2O = GDP + phosphate + H(+). Functionally, GTP hydrolase that promotes the GTP-dependent binding of aminoacyl-tRNA to the A-site of ribosomes during protein biosynthesis. In Caulobacter sp. (strain K31), this protein is Elongation factor Tu 2.